A 197-amino-acid polypeptide reads, in one-letter code: Segregation and condensation protein B (197 aa).

The protein belongs to the ScpB family. Homodimer. Homodimerization may be required to stabilize the binding of ScpA to the Smc head domains. Component of a cohesin-like complex composed of ScpA, ScpB and the Smc homodimer, in which ScpA and ScpB bind to the head domain of Smc. The presence of the three proteins is required for the association of the complex with DNA.

Its subcellular location is the cytoplasm. Functionally, participates in chromosomal partition during cell division. May act via the formation of a condensin-like complex containing Smc and ScpA that pull DNA away from mid-cell into both cell halves. The polypeptide is Segregation and condensation protein B (Halalkalibacterium halodurans (strain ATCC BAA-125 / DSM 18197 / FERM 7344 / JCM 9153 / C-125) (Bacillus halodurans)).